Reading from the N-terminus, the 283-residue chain is Polyprenyl-phosphate transporter (283 aa).

9 helical membrane-spanning segments follow: residues 27 to 47, 51 to 71, 85 to 105, 112 to 132, 148 to 168, 169 to 189, 197 to 217, 230 to 250, and 255 to 275; these read GTIA…SGIF, FWPS…AMGS, IPTM…LLKI, FTTK…VITL, TSLI…MLLP, GISG…MLAI, FAGL…FIIS, LMTF…VFPG, and IVMW…SLTL.

Belongs to the PopT family.

It is found in the cell membrane. Its activity is regulated as follows. Active in alkaline conditions. Its function is as follows. Flippase that catalyzes the transport of undecaprenyl phosphate (UndP) across the cytoplasmic membrane, from the external side to the cytoplasmic side. Is involved in UndP recycling during peptidoglycan synthesis. Necessary for peptidoglycan maintenance. The sequence is that of Polyprenyl-phosphate transporter from Staphylococcus aureus (strain NCTC 8325 / PS 47).